The sequence spans 728 residues: Phosphoribosylformylglycinamidine synthase subunit PurL (728 aa).

H40 is an active-site residue. Y43 and K82 together coordinate ATP. Residue E84 participates in Mg(2+) binding. Residues 85 to 88 (SHNH) and R107 contribute to the substrate site. The active-site Proton acceptor is the H86. D108 contacts Mg(2+). Q231 is a substrate binding site. Residue D259 participates in Mg(2+) binding. 303-305 (ESQ) is a substrate binding site. The ATP site is built by N483 and G520. N521 contacts Mg(2+). S523 provides a ligand contact to substrate.

Belongs to the FGAMS family. As to quaternary structure, monomer. Part of the FGAM synthase complex composed of 1 PurL, 1 PurQ and 2 PurS subunits.

It is found in the cytoplasm. The catalysed reaction is N(2)-formyl-N(1)-(5-phospho-beta-D-ribosyl)glycinamide + L-glutamine + ATP + H2O = 2-formamido-N(1)-(5-O-phospho-beta-D-ribosyl)acetamidine + L-glutamate + ADP + phosphate + H(+). The protein operates within purine metabolism; IMP biosynthesis via de novo pathway; 5-amino-1-(5-phospho-D-ribosyl)imidazole from N(2)-formyl-N(1)-(5-phospho-D-ribosyl)glycinamide: step 1/2. Its function is as follows. Part of the phosphoribosylformylglycinamidine synthase complex involved in the purines biosynthetic pathway. Catalyzes the ATP-dependent conversion of formylglycinamide ribonucleotide (FGAR) and glutamine to yield formylglycinamidine ribonucleotide (FGAM) and glutamate. The FGAM synthase complex is composed of three subunits. PurQ produces an ammonia molecule by converting glutamine to glutamate. PurL transfers the ammonia molecule to FGAR to form FGAM in an ATP-dependent manner. PurS interacts with PurQ and PurL and is thought to assist in the transfer of the ammonia molecule from PurQ to PurL. In Carboxydothermus hydrogenoformans (strain ATCC BAA-161 / DSM 6008 / Z-2901), this protein is Phosphoribosylformylglycinamidine synthase subunit PurL.